Here is a 494-residue protein sequence, read N- to C-terminus: Cytochrome P450 2A5 (494 aa).

S131 bears the Phosphoserine mark. K379 is modified (N6-acetyllysine). Position 439 (C439) interacts with heme.

The protein belongs to the cytochrome P450 family. Requires heme as cofactor. As to expression, liver, with a strong circadian rhythmicity. Circadian expression is regulated by DBP.

The protein resides in the endoplasmic reticulum membrane. Its subcellular location is the microsome membrane. The catalysed reaction is an organic molecule + reduced [NADPH--hemoprotein reductase] + O2 = an alcohol + oxidized [NADPH--hemoprotein reductase] + H2O + H(+). Its function is as follows. Exhibits a high coumarin 7-hydroxylase activity. This chain is Cytochrome P450 2A5 (Cyp2a5), found in Mus musculus (Mouse).